The chain runs to 439 residues: 26S proteasome regulatory subunit 6A (439 aa).

The residue at position 1 (methionine 1) is an N-acetylmethionine. Serine 9 carries the phosphoserine modification. Residue 227–234 (GPPGTGKT) participates in ATP binding. Serine 376 bears the Phosphoserine mark.

It belongs to the AAA ATPase family. As to quaternary structure, component of the 19S proteasome regulatory particle complex. The 26S proteasome consists of a 20S core particle (CP) and two 19S regulatory subunits (RP). The regulatory particle is made of a lid composed of 9 subunits, a base containing 6 ATPases including PSMC3 and few additional components. Interacts with PAAF1. (Microbial infection) Interacts with HIV-1 Tat. In terms of processing, sumoylated by UBE2I in response to MEKK1-mediated stimuli.

Its subcellular location is the cytoplasm. It localises to the nucleus. Component of the 26S proteasome, a multiprotein complex involved in the ATP-dependent degradation of ubiquitinated proteins. This complex plays a key role in the maintenance of protein homeostasis by removing misfolded or damaged proteins, which could impair cellular functions, and by removing proteins whose functions are no longer required. Therefore, the proteasome participates in numerous cellular processes, including cell cycle progression, apoptosis, or DNA damage repair. PSMC3 belongs to the heterohexameric ring of AAA (ATPases associated with diverse cellular activities) proteins that unfolds ubiquitinated target proteins that are concurrently translocated into a proteolytic chamber and degraded into peptides. In Homo sapiens (Human), this protein is 26S proteasome regulatory subunit 6A (PSMC3).